The sequence spans 499 residues: Putative protein phosphatase 2C 76 (499 aa).

Positions 1–34 (MRLGCSGRRRRLLRAALLRLVVLVLVAPPRRCAG) are cleaved as a signal peptide. The disordered stretch occupies residues 67-101 (AGSGGEGDGDRRSSSSSPPPPPHPRGCHVAVDRGR). Residues 92 to 457 (GCHVAVDRGR…DNVAAVIVPL (366 aa)) form the PPM-type phosphatase domain. 2 residues coordinate Mn(2+): Asp-138 and Gly-139. The tract at residues 286 to 306 (KKTSVVSGKRRRKRNSNNRDD) is disordered. The Mn(2+) site is built by Asp-397 and Asp-448.

Belongs to the PP2C family. It depends on Mg(2+) as a cofactor. Requires Mn(2+) as cofactor.

The enzyme catalyses O-phospho-L-seryl-[protein] + H2O = L-seryl-[protein] + phosphate. The catalysed reaction is O-phospho-L-threonyl-[protein] + H2O = L-threonyl-[protein] + phosphate. The chain is Putative protein phosphatase 2C 76 from Oryza sativa subsp. japonica (Rice).